The primary structure comprises 227 residues: uncharacterized protein (227 aa).

A signal peptide spans M1–A22.

This is an uncharacterized protein from Salmonella typhi.